Consider the following 526-residue polypeptide: GMP synthase [glutamine-hydrolyzing] (526 aa).

Residues 13–204 (TVLVVDFGAQ…LYRGAGLSPD (192 aa)) enclose the Glutamine amidotransferase type-1 domain. The active-site Nucleophile is Cys90. Active-site residues include His178 and Glu180. Residues 205–400 (WTTGNVIEEQ…LGLPDEIVQR (196 aa)) enclose the GMPS ATP-PPase domain. 232–238 (SGGVDSA) is an ATP binding site.

As to quaternary structure, homodimer.

It catalyses the reaction XMP + L-glutamine + ATP + H2O = GMP + L-glutamate + AMP + diphosphate + 2 H(+). The protein operates within purine metabolism; GMP biosynthesis; GMP from XMP (L-Gln route): step 1/1. Its function is as follows. Catalyzes the synthesis of GMP from XMP. This chain is GMP synthase [glutamine-hydrolyzing] (guaA), found in Streptomyces coelicolor (strain ATCC BAA-471 / A3(2) / M145).